Reading from the N-terminus, the 651-residue chain is Tudor domain-containing protein 3 (651 aa).

Positions 193–233 constitute a UBA domain; it reads LVDEKALKHITEMGFSKEASRQALMDNGNNLEAALNVLLTS. 3 disordered regions span residues 234–271, 287–369, and 381–450; these read NKQKPVMGPPLRGRGKGRGRIRSEDEEDLGNARPSAPS, EEPK…VSEV, and YSRY…TSIP. Serine 256 carries the phosphoserine modification. Over residues 291-312 the composition is skewed to polar residues; sequence SQPQQLHQGQYRSSNTEQNGVK. Residues 313-338 show a composition bias toward basic and acidic residues; the sequence is DNNHLRHPPRNDTRQPRNEKPPRFQR. The residue at position 345 (serine 345) is a Phosphoserine. A Glycyl lysine isopeptide (Lys-Gly) (interchain with G-Cter in SUMO2) cross-link involves residue lysine 470. Residues 555–615 form the Tudor domain; the sequence is MWKPGDECFA…KPIQTEAWEE (61 aa). A compositionally biased stretch (basic and acidic residues) spans 624–633; sequence EFRRGGDGQP. The disordered stretch occupies residues 624-651; the sequence is EFRRGGDGQPRRSTRPTQQFYQPPRARN. The tract at residues 631-651 is EBM motif; may mediate interaction with the EJC; it reads GQPRRSTRPTQQFYQPPRARN.

In terms of assembly, component of mRNA stress granules. Interacts with FMR1, FXR1, FXR2, EWSR1, FUS, SERBP1, EEF1A1 and DDX3X or DDX3Y, and with the small nuclear ribonucleoprotein-associated proteins SNRPB and SNRPN. Interacts with 'Lys-48'-linked tetra-ubiquitin, but not with monoubiquitin or 'Lys-63'-linked ubiquitin chains. May interact with the exon junction complex (EJC) composed at least of CASC3, EIF4A3, MAGOH and RBM8A. Interacts with POLR2A (via the C-terminal domain (CTD)). In terms of processing, probably cleaved by enteroviral 2A proteinase. As to expression, detected in heart, brain, placenta, lung, liver, skeletal muscle, kidney and pancreas.

The protein resides in the cytoplasm. Its subcellular location is the nucleus. In terms of biological role, scaffolding protein that specifically recognizes and binds dimethylarginine-containing proteins. Plays a role in the regulation of translation of target mRNAs by binding Arg/Gly-rich motifs (GAR) in dimethylarginine-containing proteins. In nucleus, acts as a coactivator: recognizes and binds asymmetric dimethylation on the core histone tails associated with transcriptional activation (H3R17me2a and H4R3me2a) and recruits proteins at these arginine-methylated loci. In cytoplasm, acts as an antiviral factor that participates in the assembly of stress granules together with G3BP1. The polypeptide is Tudor domain-containing protein 3 (TDRD3) (Homo sapiens (Human)).